The primary structure comprises 487 residues: b(0,+)-type amino acid transporter 1 (487 aa).

Residues 1-20 (MEETSPRRRREDEKSVHSTE) are compositionally biased toward basic and acidic residues. The tract at residues 1-23 (MEETSPRRRREDEKSVHSTEPKT) is disordered. Over 1–31 (MEETSPRRRREDEKSVHSTEPKTTSLQKEVG) the chain is Cytoplasmic. Ser18 carries the post-translational modification Phosphoserine. Residues 32-55 (LLSGICIIVGTIIGSGIFISPKSV) form a helical membrane-spanning segment. Residue 43–47 (IIGSG) coordinates L-arginine. Topologically, residues 56–62 (LANTESV) are extracellular. The helical transmembrane segment at 63 to 84 (GPCLIIWAACGVLATLGALCFA) threads the bilayer. The Cytoplasmic segment spans residues 85–110 (ELGTMITKSGGEYPYLMEAFGPIPAY). The helical transmembrane segment at 111–137 (LFSWTSLIVMKPSSFAIICLSFSEYVC) threads the bilayer. Topologically, residues 138 to 147 (AAFYLGCRPP) are extracellular. The next 2 helical transmembrane spans lie at 148 to 169 (AVVV…NALS) and 170 to 193 (VRLG…IIII). Over 194-217 (SGLVLLAQGNVKNFQNSFEGSQTS) the chain is Extracellular. Residues 218-238 (VGSISLAFYNGLWAYDGWNQL) form a helical membrane-spanning segment. An L-arginine-binding site is contributed by Asp233. Residues 239-251 (NYITEELRNPYRN) lie on the Cytoplasmic side of the membrane. A helical transmembrane segment spans residues 252 to 274 (LPMAIVIGIPLVTVCYILMNIAY). Over 275–302 (FTVMTPTELLQSQAVAVTFGDRVLYPAS) the chain is Extracellular. A helical transmembrane segment spans residues 303 to 325 (WVVPLFVAFSTIGAANGTCFTAG). The Cytoplasmic portion of the chain corresponds to 326 to 351 (RLIYVAGREGHMLKVLSYISVKRLTP). 2 helical membrane passes run 352-370 (APAL…IPGD) and 371-391 (INSL…MTIL). Residues 392–410 (GLVVMRFTRKDLERPIKVP) lie on the Cytoplasmic side of the membrane. The helical transmembrane segment at 411-431 (IFIPIIVILVSVFLILAPIIS) threads the bilayer. Residues 432 to 434 (SPA) are Extracellular-facing. Residues 435–450 (WEYLYCVLFILSGLIF) form a helical membrane-spanning segment. Residues 451–487 (YFLFVHYKFRWAQKISRPITKHLQMLMEVVPPEKDPE) lie on the Cytoplasmic side of the membrane.

Belongs to the amino acid-polyamine-organocation (APC) superfamily. Disulfide-linked heterodimer composed of the catalytic light chain subunit SLC7A9 and the heavy chain subunit SLC3A1. The heterodimer is the minimal functional unit. Assembles in heterotetramers (dimers of heterodimers) and higher order oligomers; the oligomerization is mediated by SLC3A1 likely to prevent degradation and facilitate heteromer trafficking to the plasma membrane. Interacts with CAV1. As to expression, outer medulla of kidney (at protein level). Kidney and small intestine. In the kidney localized to the apical membrane of the proximal tubules.

The protein localises to the apical cell membrane. It catalyses the reaction L-leucine(out) + L-arginine(in) = L-leucine(in) + L-arginine(out). The catalysed reaction is L-histidine(out) + L-arginine(in) = L-histidine(in) + L-arginine(out). It carries out the reaction L-arginine(in) + L-phenylalanine(out) = L-arginine(out) + L-phenylalanine(in). The enzyme catalyses L-cysteine(out) + L-arginine(in) = L-cysteine(in) + L-arginine(out). It catalyses the reaction L-cystine(out) + L-arginine(in) = L-cystine(in) + L-arginine(out). The catalysed reaction is L-lysine(out) + L-arginine(in) = L-lysine(in) + L-arginine(out). Its function is as follows. Associates with SLC3A1 to form a functional transporter complex that mediates the electrogenic exchange between cationic amino acids and neutral amino acids, with a stoichiometry of 1:1. Has system b(0,+)-like activity with high affinity for extracellular cationic amino acids and L-cystine and lower affinity for intracellular neutral amino acids. Substrate exchange is driven by high concentration of intracellular neutral amino acids and the intracellular reduction of L-cystine to L-cysteine. Required for reabsorption of L-cystine and dibasic amino acids across the brush border membrane in renal proximal tubules. This chain is b(0,+)-type amino acid transporter 1 (Slc7a9), found in Rattus norvegicus (Rat).